We begin with the raw amino-acid sequence, 406 residues long: 5-cytosine rRNA methyltransferase NSUN4 (406 aa).

Residues glycine 207, glycine 208, lysine 209, aspartate 226, arginine 231, aspartate 259, glycine 260, and aspartate 277 each contribute to the S-adenosyl-L-methionine site. Cysteine 332 acts as the Nucleophile in catalysis.

The protein belongs to the class I-like SAM-binding methyltransferase superfamily. RsmB/NOP family.

The protein resides in the mitochondrion. It catalyses the reaction a cytidine in rRNA + S-adenosyl-L-methionine = a 5-methylcytidine in rRNA + S-adenosyl-L-homocysteine + H(+). It carries out the reaction a cytidine in mRNA + S-adenosyl-L-methionine = a 5-methylcytidine in mRNA + S-adenosyl-L-homocysteine + H(+). Its function is as follows. Involved in mitochondrial ribosome large subunit biogenesis. Mitochondrial RNA cytosine C(5)-methyltransferase that methylates cytosine to 5-methylcytosine (m5C) in various RNAs, such as rRNAs, mRNAs and some long non-coding RNAs (lncRNAs). Involved in mitochondrial ribosome small subunit (SSU) maturation by catalyzing methylation of mitochondrial 12S rRNA. In Xenopus tropicalis (Western clawed frog), this protein is 5-cytosine rRNA methyltransferase NSUN4 (nsun4).